We begin with the raw amino-acid sequence, 329 residues long: CDP-6-deoxy-L-threo-D-glycero-4-hexulose-3-dehydrase reductase (329 aa).

In terms of domain architecture, 2Fe-2S ferredoxin-type spans 2–93 (SLNVKLHPSG…ELDVNYYPEL (92 aa)). Positions 37, 42, 45, and 75 each coordinate [2Fe-2S] cluster. Residues 98–197 (KKTYPCKLDS…EGPQGTFFVR (100 aa)) enclose the FAD-binding FR-type domain.

As to quaternary structure, monomer.

It participates in nucleotide-sugar biosynthesis; CDP-ascarylose biosynthesis. Its pathway is bacterial outer membrane biogenesis; lipopolysaccharide biosynthesis. In terms of biological role, participates in the conversion of CDP-6-deoxy-D-glycero-L-threo-4-hexulose to 3,6-dideoxy-D-glycero-D-glycero-4-hexulose together with CDP-6-deoxy-D-glycero-L-threo-4-hexulose-3-dehydrase (E1) in two consecutive steps. The detailed mechanism of E3 is not yet resolved. This chain is CDP-6-deoxy-L-threo-D-glycero-4-hexulose-3-dehydrase reductase (ascD), found in Yersinia pseudotuberculosis serotype I (strain IP32953).